Reading from the N-terminus, the 397-residue chain is Xylose isomerase (397 aa).

Residues H54 and D57 contribute to the active site. Mg(2+) is bound by residues E181, E217, H220, D245, D255, D257, and D293.

The protein belongs to the xylose isomerase family. As to quaternary structure, homotetramer. It depends on Mg(2+) as a cofactor.

Its subcellular location is the cytoplasm. It catalyses the reaction alpha-D-xylose = alpha-D-xylulofuranose. The protein is Xylose isomerase of Clavibacter sepedonicus (Clavibacter michiganensis subsp. sepedonicus).